The sequence spans 828 residues: ADP-ribosylation factor GTPase-activating protein AGD1 (828 aa).

The region spanning 1 to 225 is the BAR domain; sequence MHFAKLDDSP…INQVLAYAHQ (225 aa). Residues 225-255 are a coiled coil; it reads QSRECANYEMASLNERMQEYQRQVDRETRNS. Residues 247 to 268 are disordered; that stretch reads QVDRETRNSCVSPTGDGMRHNS. Residues 288 to 425 form the PH domain; that stretch reads QTIRQGYLSK…WIEKITGVIA (138 aa). Ser441 is modified (phosphoserine). The Arf-GAP domain maps to 498–643; that stretch reads EKPIDVLTRV…IFVRKAIDSQ (146 aa). The C4-type zinc finger occupies 513-536; sequence CADCGAPEPDWASLNLGVLICIEC. Residues 590-600 are compositionally biased toward low complexity; it reads TSSASRSSGTP. Residues 590–611 form a disordered region; it reads TSSASRSSGTPKSDRPRKLLVR. 2 ANK repeats span residues 735 to 764 and 768 to 797; these read NDCS…KINA and KGRT…DPNA.

In terms of tissue distribution, expressed in roots, but not in hypocotyls or cotyledons. Low levels detected in leaf and shoot apical meristems and in siliques.

It localises to the endosome. Probable GTPase-activating protein. Regulator of membrane trafficking. Required for maintaining a straight growth of root hairs. The chain is ADP-ribosylation factor GTPase-activating protein AGD1 (AGD1) from Arabidopsis thaliana (Mouse-ear cress).